Consider the following 1363-residue polypeptide: DNA-directed RNA polymerase subunit beta (1363 aa).

Belongs to the RNA polymerase beta chain family. As to quaternary structure, the RNAP catalytic core consists of 2 alpha, 1 beta, 1 beta' and 1 omega subunit. When a sigma factor is associated with the core the holoenzyme is formed, which can initiate transcription.

The enzyme catalyses RNA(n) + a ribonucleoside 5'-triphosphate = RNA(n+1) + diphosphate. In terms of biological role, DNA-dependent RNA polymerase catalyzes the transcription of DNA into RNA using the four ribonucleoside triphosphates as substrates. This Syntrophus aciditrophicus (strain SB) protein is DNA-directed RNA polymerase subunit beta.